The primary structure comprises 261 residues: MPQNEYIEQHIKQHGRRLDYEERKRKKAAREGHRIAKDAQELKGWRGKQFAKKRYSEKVAMKKKIKTHQESKVKGPATPKEDDGEALPTYLLDRQTNNSAKAISSSIKQKRLEKADKFAVPLPRVKGISEEEMFKVIKTGKQKSKAWKRMITKHTFVGEGFTRRPVKMERIIRPSALRQKKANVTHPELAVTVFLPILGVKKNPQSPMYTQLGVLTKGTIIEVNVSELGLVTAGGKVVWGKYAQITNEPDRDGCVNAVLLV.

The tract at residues 1 to 34 is disordered; that stretch reads MPQNEYIEQHIKQHGRRLDYEERKRKKAAREGHR. Positions 7 to 34 are enriched in basic and acidic residues; the sequence is IEQHIKQHGRRLDYEERKRKKAAREGHR. 2 consecutive short sequence motifs (nuclear localization signal) follow at residues 15–22 and 51–58; these read GRRLDYEE and AKKRYSEK. Residues 61-85 form a disordered region; the sequence is MKKKIKTHQESKVKGPATPKEDDGE.

Belongs to the eukaryotic ribosomal protein eS8 family. Ribosome biogenesis protein NSA2 subfamily. In terms of assembly, component of the pre-66S ribosomal particle. Interacts with NOP7 and RRP1. Interacts with RSA4 (via WD repeats).

Its subcellular location is the nucleus. It is found in the nucleolus. Its function is as follows. Involved in the biogenesis of the 60S ribosomal subunit. May play a part in the quality control of pre-60S particles. This Debaryomyces hansenii (strain ATCC 36239 / CBS 767 / BCRC 21394 / JCM 1990 / NBRC 0083 / IGC 2968) (Yeast) protein is Ribosome biogenesis protein NSA2 (NSA2).